Reading from the N-terminus, the 367-residue chain is 3-dehydroquinate synthase (367 aa).

Residues D69–K74, G103–D107, T127–T128, K140, K149, and T167–T170 each bind NAD(+). Zn(2+)-binding residues include E182, H245, and H262.

The protein belongs to the sugar phosphate cyclases superfamily. Dehydroquinate synthase family. The cofactor is Co(2+). Requires Zn(2+) as cofactor. NAD(+) serves as cofactor.

It is found in the cytoplasm. It carries out the reaction 7-phospho-2-dehydro-3-deoxy-D-arabino-heptonate = 3-dehydroquinate + phosphate. It participates in metabolic intermediate biosynthesis; chorismate biosynthesis; chorismate from D-erythrose 4-phosphate and phosphoenolpyruvate: step 2/7. In terms of biological role, catalyzes the conversion of 3-deoxy-D-arabino-heptulosonate 7-phosphate (DAHP) to dehydroquinate (DHQ). In Azotobacter vinelandii (strain DJ / ATCC BAA-1303), this protein is 3-dehydroquinate synthase.